Here is a 514-residue protein sequence, read N- to C-terminus: Alpha-1B adrenergic receptor (514 aa).

The Extracellular portion of the chain corresponds to 1 to 45; that stretch reads MNPDLDTGHNTSAPAHWGELKDANFTGPNQTSSNSTLPQLDVTRA. Residues asparagine 10, asparagine 24, asparagine 29, and asparagine 34 are each glycosylated (N-linked (GlcNAc...) asparagine). A helical transmembrane segment spans residues 46–69; that stretch reads ISVGCLGAFILFAIVGNILVILSV. The Cytoplasmic segment spans residues 70-82; sequence ACNRHLRTPTNYF. A helical membrane pass occupies residues 83-104; it reads IVNLAIADLLLSFTDLPFSATL. The Extracellular portion of the chain corresponds to 105–114; the sequence is EVLGYWVLGR. Residues 115–140 traverse the membrane as a helical segment; it reads IFCDIWAAVDVLCCTASILSLCAISI. Cysteine 117 and cysteine 194 are joined by a disulfide. The Cytoplasmic segment spans residues 141-160; sequence DRYIGVRYSLQYPTLVTRRK. The chain crosses the membrane as a helical span at residues 161 to 183; the sequence is AILALLSVWVLSTVISIGPLLGW. Over 184-200 the chain is Extracellular; sequence KEPAPNDDKECGVTEEP. Residues 201–223 traverse the membrane as a helical segment; sequence FYALFSSLGSFYIPLAVILVMYC. At 224-294 the chain is on the cytoplasmic side; the sequence is RVYIVAKRTT…FSREKKAAKT (71 aa). Residue threonine 263 is modified to Phosphothreonine. Residues 295 to 318 traverse the membrane as a helical segment; sequence LGIVVGMFILCWLPFFIALPLGSL. The Extracellular portion of the chain corresponds to 319–325; the sequence is FSTLKPP. A helical membrane pass occupies residues 326 to 350; sequence DAVFKVVFWLGYFNSCLNPIIYPCS. Over 351–514 the chain is Cytoplasmic; that stretch reads SKEFKRAFMR…SNMPLAPGHF (164 aa). Residue cysteine 364 is the site of S-palmitoyl cysteine attachment. Positions 367–377 match the Nuclear localization signal motif; that stretch reads RGGRRRRRRRR. Disordered stretches follow at residues 391 to 429 and 473 to 514; these read GGSLERSQSRKDSLDDSGSCMSGSQRTLPSASPSPGYLG and LGEP…PGHF. Residues 409–423 show a composition bias toward polar residues; sequence SCMSGSQRTLPSASP.

The protein belongs to the G-protein coupled receptor 1 family. Adrenergic receptor subfamily. ADRA1B sub-subfamily. As to quaternary structure, homo- and heterooligomer. Heterooligomerizes with ADRA1B homooligomers in cardiac myocytes. Interacts with CAVIN4.

Its subcellular location is the nucleus membrane. It is found in the cell membrane. The protein resides in the cytoplasm. The protein localises to the membrane. It localises to the caveola. In terms of biological role, this alpha-adrenergic receptor mediates its action by association with G proteins that activate a phosphatidylinositol-calcium second messenger system. Its effect is mediated by G(q) and G(11) proteins. Nuclear ADRA1A-ADRA1B heterooligomers regulate phenylephrine (PE)-stimulated ERK signaling in cardiac myocytes. This is Alpha-1B adrenergic receptor (Adra1b) from Mus musculus (Mouse).